Here is a 213-residue protein sequence, read N- to C-terminus: ATP-dependent Clp protease proteolytic subunit 3 (213 aa).

Residue Ser-107 is the Nucleophile of the active site. His-132 is a catalytic residue.

Belongs to the peptidase S14 family. Fourteen ClpP subunits assemble into 2 heptameric rings which stack back to back to give a disk-like structure with a central cavity, resembling the structure of eukaryotic proteasomes.

The protein resides in the cytoplasm. The catalysed reaction is Hydrolysis of proteins to small peptides in the presence of ATP and magnesium. alpha-casein is the usual test substrate. In the absence of ATP, only oligopeptides shorter than five residues are hydrolyzed (such as succinyl-Leu-Tyr-|-NHMec, and Leu-Tyr-Leu-|-Tyr-Trp, in which cleavage of the -Tyr-|-Leu- and -Tyr-|-Trp bonds also occurs).. In terms of biological role, cleaves peptides in various proteins in a process that requires ATP hydrolysis. Has a chymotrypsin-like activity. Plays a major role in the degradation of misfolded proteins. The chain is ATP-dependent Clp protease proteolytic subunit 3 from Frankia casuarinae (strain DSM 45818 / CECT 9043 / HFP020203 / CcI3).